The sequence spans 179 residues: ATP synthase subunit delta (179 aa).

The protein belongs to the ATPase delta chain family. F-type ATPases have 2 components, F(1) - the catalytic core - and F(0) - the membrane proton channel. F(1) has five subunits: alpha(3), beta(3), gamma(1), delta(1), epsilon(1). F(0) has three main subunits: a(1), b(2) and c(10-14). The alpha and beta chains form an alternating ring which encloses part of the gamma chain. F(1) is attached to F(0) by a central stalk formed by the gamma and epsilon chains, while a peripheral stalk is formed by the delta and b chains.

It localises to the cell membrane. F(1)F(0) ATP synthase produces ATP from ADP in the presence of a proton or sodium gradient. F-type ATPases consist of two structural domains, F(1) containing the extramembraneous catalytic core and F(0) containing the membrane proton channel, linked together by a central stalk and a peripheral stalk. During catalysis, ATP synthesis in the catalytic domain of F(1) is coupled via a rotary mechanism of the central stalk subunits to proton translocation. Functionally, this protein is part of the stalk that links CF(0) to CF(1). It either transmits conformational changes from CF(0) to CF(1) or is implicated in proton conduction. The chain is ATP synthase subunit delta from Metamycoplasma arthritidis (strain 158L3-1) (Mycoplasma arthritidis).